The following is a 568-amino-acid chain: Multidrug and toxin extrusion protein 1 (568 aa).

An N-acetylmethionine modification is found at Met-1. Residues 1–36 (MEAPVELGPGGRQASPERRHWLRCLVLSDFREELRA) are Cytoplasmic-facing. Residues 37 to 57 (LLVLACPAFLAQLMVFLISFV) traverse the membrane as a helical segment. The Extracellular portion of the chain corresponds to 58 to 71 (SSVFCGHLSKLELN). Residues 72 to 92 (AVTLAIAVINVMGVSVGFGLS) form a helical membrane-spanning segment. The Cytoplasmic portion of the chain corresponds to 93 to 119 (SACDTLISQTYGSRNLKHVGVILQRGS). The chain crosses the membrane as a helical span at residues 120–140 (LILLLCCLPCWALFLNTQHIL). Residues 141–151 (LLFRQDPAVSR) are Extracellular-facing. The chain crosses the membrane as a helical span at residues 152–172 (LTQTYVTIFIPALPATFLYTL). Residues 173-175 (QVK) are Cytoplasmic-facing. Residues 176-196 (YLLNQGIVLPQVVTGVAANLV) traverse the membrane as a helical segment. The Extracellular portion of the chain corresponds to 197-214 (NALANYLFVYQLHLGVMG). Residues 215 to 235 (SALANTVAQFTLALLLFLYIL) form a helical membrane-spanning segment. Over 236-255 (RSKVYQATWGGWSLECLQDW) the chain is Cytoplasmic. The chain crosses the membrane as a helical span at residues 256-278 (ASFFRLAIPSMLMLCMEWWAYEI). At 279–294 (GSFLSGILGMVELGAQ) the chain is on the extracellular side. A helical membrane pass occupies residues 295 to 315 (SVTYELAVIVYMIPMGLSVAV). Residues 316–335 (NVRVGNALGAGNIEQAKKSS) lie on the Cytoplasmic side of the membrane. A helical membrane pass occupies residues 336–356 (AVALLVTELIAVVFCVMLLSC). Residues 357 to 369 (KDLVGYIFTSDRD) lie on the Extracellular side of the membrane. A helical membrane pass occupies residues 370 to 390 (IIALVAQVTPIYAVSHLFESL). Residues 391 to 407 (AGTSGGILRGSGNQKFG) are Cytoplasmic-facing. Residues 408 to 430 (AIVNAIGYYVVGLPIGIALMFAA) traverse the membrane as a helical segment. Over 431–433 (KLG) the chain is Extracellular. Residues 434 to 456 (VIGLWLGIVVCAVSQAVCFLGFI) form a helical membrane-spanning segment. At 457–544 (ARLNWTKACQ…LSGKQLALRR (88 aa)) the chain is on the cytoplasmic side. A helical transmembrane segment spans residues 545–565 (GLLLLGVILVLLAGILVKVYV). Residues 566-568 (RTQ) lie on the Extracellular side of the membrane.

The protein belongs to the multi antimicrobial extrusion (MATE) (TC 2.A.66.1) family. In terms of tissue distribution, predominantly expressed in kidney and liver.

Its subcellular location is the cell membrane. It localises to the apical cell membrane. It carries out the reaction thiamine(out) + H(+)(in) = thiamine(in) + H(+)(out). The enzyme catalyses estrone 3-sulfate(in) + H(+)(out) = estrone 3-sulfate(out) + H(+)(in). It catalyses the reaction creatinine(in) + H(+)(out) = creatinine(out) + H(+)(in). The catalysed reaction is agmatine(in) + H(+)(out) = agmatine(out) + H(+)(in). Multidrug efflux pump that functions as a H(+)/organic cation antiporter. Plays a physiological role in the excretion of cationic compounds including endogenous metabolites, drugs, toxins through the kidney and liver, into urine and bile respectively. Mediates the efflux of endogenous compounds such as creatinine, vitamin B1/thiamine, agmatine and estrone-3-sulfate. May also contribute to regulate the transport of cationic compounds in testis across the blood-testis-barrier. This Oryctolagus cuniculus (Rabbit) protein is Multidrug and toxin extrusion protein 1 (SLC47A1).